A 286-amino-acid polypeptide reads, in one-letter code: Translocon-associated protein subunit alpha (286 aa).

A signal peptide spans 1-21; sequence MRLLPRLLLLFLLAFPAAVLL. Residues 22–207 are Lumenal-facing; the sequence is RGGPGGSLAL…EREDGLDGET (186 aa). Acidic residues predominate over residues 46-75; sequence IIEDEDDEAEVEEDEPTDLAEDKEEEDVSS. A disordered region spans residues 46–83; it reads IIEDEDDEAEVEEDEPTDLAEDKEEEDVSSEPEASPSA. N-linked (GlcNAc...) asparagine glycosylation is found at asparagine 136 and asparagine 191. Residues 208 to 228 traverse the membrane as a helical segment; that stretch reads IFMYMFLAGLGLLVVVGLHQL. The Cytoplasmic portion of the chain corresponds to 229-286; sequence LESRKRKRPIQKVEMGTSSQNDVDMSWIPQETLNQINKASPRRQPRKRAQKRSVGSDE. The segment at 236 to 286 is disordered; that stretch reads RPIQKVEMGTSSQNDVDMSWIPQETLNQINKASPRRQPRKRAQKRSVGSDE. Polar residues predominate over residues 244–266; it reads GTSSQNDVDMSWIPQETLNQINK. Serine 247 is subject to Phosphoserine. Threonine 260 bears the Phosphothreonine mark. Serine 268 is modified (phosphoserine). The span at 268–279 shows a compositional bias: basic residues; the sequence is SPRRQPRKRAQK.

The protein belongs to the TRAP-alpha family. Heterotetramer of TRAP-alpha, TRAP-beta, TRAP-delta and TRAP-gamma. Interacts with palmitoylated calnexin (CALX), the interaction is required for efficient folding of glycosylated proteins.

Its subcellular location is the endoplasmic reticulum membrane. In terms of biological role, TRAP proteins are part of a complex whose function is to bind calcium to the ER membrane and thereby regulate the retention of ER resident proteins. May be involved in the recycling of the translocation apparatus after completion of the translocation process or may function as a membrane-bound chaperone facilitating folding of translocated proteins. In Mus musculus (Mouse), this protein is Translocon-associated protein subunit alpha (Ssr1).